The following is a 309-amino-acid chain: L-aminoadipate-semialdehyde dehydrogenase-phosphopantetheinyl transferase (309 aa).

CoA is bound by residues Arg47, Arg86 to Lys91, and Asn108 to His111. Mg(2+) contacts are provided by Asp129 and Glu181. Glu181 to Lys185 is a binding site for CoA. Ser258 carries the phosphoserine modification.

The protein belongs to the P-Pant transferase superfamily. AcpS family. Monomer. Mg(2+) is required as a cofactor.

It localises to the cytoplasm. The protein resides in the cytosol. The enzyme catalyses apo-[ACP] + CoA = holo-[ACP] + adenosine 3',5'-bisphosphate + H(+). The catalysed reaction is apo-[ACP] + acetyl-CoA = acetyl-[ACP] + adenosine 3',5'-bisphosphate + H(+). Catalyzes the post-translational modification of target proteins by phosphopantetheine. Can transfer the 4'-phosphopantetheine moiety from coenzyme A, regardless of whether the CoA is presented in the free thiol form or as an acetyl thioester, to a serine residue of a broad range of acceptors including the acyl carrier domain of FASN. The chain is L-aminoadipate-semialdehyde dehydrogenase-phosphopantetheinyl transferase (AASDHPPT) from Pongo abelii (Sumatran orangutan).